The primary structure comprises 78 residues: Large ribosomal subunit protein bL28 (78 aa).

It belongs to the bacterial ribosomal protein bL28 family.

The sequence is that of Large ribosomal subunit protein bL28 from Parasynechococcus marenigrum (strain WH8102).